The primary structure comprises 457 residues: Putative methyltransferase MT1451 (457 aa).

S-adenosyl-L-methionine contacts are provided by residues 276–282 (CAGPGGK), glutamate 301, aspartate 325, and aspartate 341. Cysteine 394 (nucleophile) is an active-site residue.

It belongs to the class I-like SAM-binding methyltransferase superfamily. RsmB/NOP family.

Functionally, may act as RNA methyltransferase. This chain is Putative methyltransferase MT1451, found in Mycobacterium tuberculosis (strain CDC 1551 / Oshkosh).